Consider the following 406-residue polypeptide: Cysteine desulfurase (406 aa).

The residue at position 226 (Lys-226) is an N6-(pyridoxal phosphate)lysine. Cys-364 functions as the Cysteine persulfide intermediate in the catalytic mechanism.

The protein belongs to the class-V pyridoxal-phosphate-dependent aminotransferase family. Csd subfamily. In terms of assembly, homodimer. Interacts with SufE and the SufBCD complex composed of SufB, SufC and SufD. The interaction with SufE is required to mediate the direct transfer of the sulfur atom from the S-sulfanylcysteine. The cofactor is pyridoxal 5'-phosphate.

The protein resides in the cytoplasm. It catalyses the reaction (sulfur carrier)-H + L-cysteine = (sulfur carrier)-SH + L-alanine. The enzyme catalyses L-selenocysteine + AH2 = hydrogenselenide + L-alanine + A + H(+). It functions in the pathway cofactor biosynthesis; iron-sulfur cluster biosynthesis. Functionally, cysteine desulfurases mobilize the sulfur from L-cysteine to yield L-alanine, an essential step in sulfur metabolism for biosynthesis of a variety of sulfur-containing biomolecules. Component of the suf operon, which is activated and required under specific conditions such as oxidative stress and iron limitation. Acts as a potent selenocysteine lyase in vitro, that mobilizes selenium from L-selenocysteine. Selenocysteine lyase activity is however unsure in vivo. The polypeptide is Cysteine desulfurase (Escherichia coli O45:K1 (strain S88 / ExPEC)).